The sequence spans 585 residues: Voltage-gated potassium channel KCNC1 (585 aa).

Residues 1-190 lie on the Cytoplasmic side of the membrane; that stretch reads MGQGDESERI…EDPYSSRYAR (190 aa). S44 is subject to Phosphoserine. 4 residues coordinate Zn(2+): H77, C83, C104, and C105. The disordered stretch occupies residues 121–147; that stretch reads SFGGAPLDNSADDADADGPGDSGDGED. 4 positions are modified to phosphoserine: S130, S142, S158, and S160. Residues 130 to 147 show a composition bias toward acidic residues; it reads SADDADADGPGDSGDGED. A helical transmembrane segment spans residues 191-209; it reads YVAFASLFFILVSITTFCL. Residues N220 and N229 are each glycosylated (N-linked (GlcNAc...) asparagine). Residues 248 to 267 form a helical membrane-spanning segment; it reads IEGVCVVWFTFEFLMRVVFC. At 268-276 the chain is on the cytoplasmic side; that stretch reads PNKVEFIKN. The chain crosses the membrane as a helical span at residues 277-295; that stretch reads SLNIIDFVAILPFYLEVGL. The helical; Voltage-sensor transmembrane segment at 309–331 threads the bilayer; the sequence is FLRVVRFVRILRIFKLTRHFVGL. Topologically, residues 332 to 344 are cytoplasmic; that stretch reads RVLGHTLRASTNE. A helical membrane pass occupies residues 345 to 366; it reads FLLLIIFLALGVLIFATMIYYA. K(+) is bound by residues T400, L401, G402, and Y403. The Selectivity filter signature appears at 400–405; the sequence is TLGYGD. The helical transmembrane segment at 415-436 threads the bilayer; it reads LVGALCALAGVLTIAMPVPVIV. At 437-585 the chain is on the cytoplasmic side; the sequence is NNFGMYYSLA…YMPTEAVRVT (149 aa). S474 is modified (phosphoserine). T483 bears the Phosphothreonine mark.

It belongs to the potassium channel family. C (Shaw) (TC 1.A.1.2) subfamily. Kv3.1/KCNC1 sub-subfamily. In terms of assembly, homotetramer. Homomultimer. Heteromultimer with KCNG3, KCNG4 and KCNV2. Heteromultimer with KCNC2. Heterotetramer with KCNC3. Interacts with the ancillary subunits KCNE1 and KCNE2; the interaction modulates channel activity. N-glycosylated; contains sialylated glycans. As to expression, expressed in brain. Expressed in globus pallidal neurons of the basal ganglia (at protein level). Detected on Purkinje cells in the cerebellum molecular layer (at protein level).

The protein localises to the cell membrane. Its subcellular location is the cell projection. It localises to the axon. The protein resides in the presynaptic cell membrane. It carries out the reaction K(+)(in) = K(+)(out). In terms of biological role, voltage-gated potassium channel that opens in response to the voltage difference across the membrane and through which potassium ions pass in accordance with their electrochemical gradient. The mechanism is time-dependent and inactivation is slow. Plays an important role in the rapid repolarization of fast-firing brain neurons. Can form functional homotetrameric channels and heterotetrameric channels that contain variable proportions of KCNC2, and possibly other family members as well. Contributes to fire sustained trains of very brief action potentials at high frequency in pallidal neurons. The chain is Voltage-gated potassium channel KCNC1 from Rattus norvegicus (Rat).